A 54-amino-acid chain; its full sequence is MFQISLDMISNKINLLGLLPEAYAPFDHIVDVLPIIPILFFLLAFVWQASVKFR.

The propeptide occupies 1–17; sequence MFQISLDMISNKINLLG. The chain crosses the membrane as a helical span at residues 29–49; that stretch reads IVDVLPIIPILFFLLAFVWQA.

The protein belongs to the PsbK family. In terms of assembly, PSII is composed of 1 copy each of membrane proteins PsbA, PsbB, PsbC, PsbD, PsbE, PsbF, PsbH, PsbI, PsbJ, PsbK, PsbL, PsbM, PsbT, PsbY, PsbZ, Psb30/Ycf12, at least 3 peripheral proteins of the oxygen-evolving complex and a large number of cofactors. It forms dimeric complexes.

It localises to the plastid. It is found in the chloroplast thylakoid membrane. Functionally, one of the components of the core complex of photosystem II (PSII). PSII is a light-driven water:plastoquinone oxidoreductase that uses light energy to abstract electrons from H(2)O, generating O(2) and a proton gradient subsequently used for ATP formation. It consists of a core antenna complex that captures photons, and an electron transfer chain that converts photonic excitation into a charge separation. In Euglena stellata, this protein is Photosystem II reaction center protein K.